Here is a 487-residue protein sequence, read N- to C-terminus: 3-octaprenyl-4-hydroxybenzoate carboxy-lyase (487 aa).

Mn(2+) is bound at residue Asn172. Residues 175–177 (IYR), 189–191 (RWL), and 194–195 (RG) each bind prenylated FMN. Residue Glu238 coordinates Mn(2+). The Proton donor role is filled by Asp287.

It belongs to the UbiD family. Homohexamer. Prenylated FMN is required as a cofactor. Requires Mn(2+) as cofactor.

Its subcellular location is the cell membrane. It carries out the reaction a 4-hydroxy-3-(all-trans-polyprenyl)benzoate + H(+) = a 2-(all-trans-polyprenyl)phenol + CO2. Its pathway is cofactor biosynthesis; ubiquinone biosynthesis. Functionally, catalyzes the decarboxylation of 3-octaprenyl-4-hydroxy benzoate to 2-octaprenylphenol, an intermediate step in ubiquinone biosynthesis. This is 3-octaprenyl-4-hydroxybenzoate carboxy-lyase from Actinobacillus pleuropneumoniae serotype 3 (strain JL03).